The following is a 143-amino-acid chain: Actin-depolymerizing factor 5 (143 aa).

The 133-residue stretch at 11–143 (GMNVKEECQR…GYDVIRGRAQ (133 aa)) folds into the ADF-H domain.

The protein belongs to the actin-binding proteins ADF family.

In terms of biological role, actin-depolymerizing protein. Severs actin filaments (F-actin) and binds to actin monomers. This Oryza sativa subsp. japonica (Rice) protein is Actin-depolymerizing factor 5 (ADF5).